We begin with the raw amino-acid sequence, 20 residues long: Acidic phospholipase A2 CbIbeta (20 aa).

It belongs to the phospholipase A2 family. Group II subfamily. D49 sub-subfamily. Heterodimer of an acidic subunit (CbIalpha or CbIbeta) and a basic subunit (CbII). The acidic subunit (CbI) is non-toxic, and increases the toxicity of the basic subunit (CbII). The cofactor is Ca(2+). In terms of processing, contains 7 disulfide bonds. Expressed by the venom gland.

It is found in the secreted. It catalyses the reaction a 1,2-diacyl-sn-glycero-3-phosphocholine + H2O = a 1-acyl-sn-glycero-3-phosphocholine + a fatty acid + H(+). Its function is as follows. Heterodimer: presynaptic neurotoxin. In terms of biological role, monomer: Snake venom phospholipase A2 (PLA2) is inactive towards micellar phosphatidylcholine but is weakly active towards non-micellar dithiolecithin. PLA2 catalyzes the calcium-dependent hydrolysis of the 2-acyl groups in 3-sn-phosphoglycerides. The chain is Acidic phospholipase A2 CbIbeta from Pseudocerastes fieldi (Field's horned viper).